Here is a 614-residue protein sequence, read N- to C-terminus: Methionine--tRNA ligase (614 aa).

The 'HIGH' region motif lies at 11-21 (PYTNGPRHIGH). Zn(2+) contacts are provided by Cys-143, Cys-146, Cys-156, and Cys-159. Positions 359-363 (QFSTS) match the 'KMSKS' region motif. Thr-362 lines the ATP pocket.

It belongs to the class-I aminoacyl-tRNA synthetase family. MetG type 1 subfamily. Monomer. The cofactor is Zn(2+).

The protein resides in the cytoplasm. It carries out the reaction tRNA(Met) + L-methionine + ATP = L-methionyl-tRNA(Met) + AMP + diphosphate. Functionally, is required not only for elongation of protein synthesis but also for the initiation of all mRNA translation through initiator tRNA(fMet) aminoacylation. In Beutenbergia cavernae (strain ATCC BAA-8 / DSM 12333 / CCUG 43141 / JCM 11478 / NBRC 16432 / NCIMB 13614 / HKI 0122), this protein is Methionine--tRNA ligase.